The primary structure comprises 471 residues: NADH-quinone oxidoreductase subunit N 1 (471 aa).

Transmembrane regions (helical) follow at residues alanine 11–tryptophan 31, threonine 39–alanine 59, alanine 81–histidine 101, threonine 105–glycine 125, leucine 127–tryptophan 147, leucine 162–alanine 182, alanine 200–valine 220, proline 234–tyrosine 254, leucine 270–glutamine 290, methionine 296–glycine 316, alanine 324–alanine 344, alanine 365–valine 385, glycine 398–leucine 418, and alanine 444–leucine 464.

Belongs to the complex I subunit 2 family. As to quaternary structure, NDH-1 is composed of 14 different subunits. Subunits NuoA, H, J, K, L, M, N constitute the membrane sector of the complex.

The protein resides in the cell membrane. The enzyme catalyses a quinone + NADH + 5 H(+)(in) = a quinol + NAD(+) + 4 H(+)(out). In terms of biological role, NDH-1 shuttles electrons from NADH, via FMN and iron-sulfur (Fe-S) centers, to quinones in the respiratory chain. The immediate electron acceptor for the enzyme in this species is believed to be a menaquinone. Couples the redox reaction to proton translocation (for every two electrons transferred, four hydrogen ions are translocated across the cytoplasmic membrane), and thus conserves the redox energy in a proton gradient. This Streptomyces griseus subsp. griseus (strain JCM 4626 / CBS 651.72 / NBRC 13350 / KCC S-0626 / ISP 5235) protein is NADH-quinone oxidoreductase subunit N 1.